The primary structure comprises 244 residues: Pyridoxine 5'-phosphate synthase (244 aa).

Residue Asn12 coordinates 3-amino-2-oxopropyl phosphate. 14-15 provides a ligand contact to 1-deoxy-D-xylulose 5-phosphate; the sequence is DH. Arg23 lines the 3-amino-2-oxopropyl phosphate pocket. His48 (proton acceptor) is an active-site residue. 1-deoxy-D-xylulose 5-phosphate contacts are provided by Arg50 and His55. Catalysis depends on Glu75, which acts as the Proton acceptor. Thr105 contributes to the 1-deoxy-D-xylulose 5-phosphate binding site. The active-site Proton donor is His196. Residues Gly197 and 218–219 each bind 3-amino-2-oxopropyl phosphate; that span reads GH.

It belongs to the PNP synthase family. In terms of assembly, homooctamer; tetramer of dimers.

It is found in the cytoplasm. The enzyme catalyses 3-amino-2-oxopropyl phosphate + 1-deoxy-D-xylulose 5-phosphate = pyridoxine 5'-phosphate + phosphate + 2 H2O + H(+). The protein operates within cofactor biosynthesis; pyridoxine 5'-phosphate biosynthesis; pyridoxine 5'-phosphate from D-erythrose 4-phosphate: step 5/5. Catalyzes the complicated ring closure reaction between the two acyclic compounds 1-deoxy-D-xylulose-5-phosphate (DXP) and 3-amino-2-oxopropyl phosphate (1-amino-acetone-3-phosphate or AAP) to form pyridoxine 5'-phosphate (PNP) and inorganic phosphate. The chain is Pyridoxine 5'-phosphate synthase from Alcanivorax borkumensis (strain ATCC 700651 / DSM 11573 / NCIMB 13689 / SK2).